A 103-amino-acid chain; its full sequence is Small ribosomal subunit protein uS10 (103 aa).

Belongs to the universal ribosomal protein uS10 family. Part of the 30S ribosomal subunit.

Its function is as follows. Involved in the binding of tRNA to the ribosomes. The polypeptide is Small ribosomal subunit protein uS10 (Salinibacter ruber (strain DSM 13855 / M31)).